The sequence spans 240 residues: 2,3,4,5-tetrahydropyridine-2,6-dicarboxylate N-acetyltransferase (240 aa).

This sequence belongs to the transferase hexapeptide repeat family. DapH subfamily.

It catalyses the reaction (S)-2,3,4,5-tetrahydrodipicolinate + acetyl-CoA + H2O = L-2-acetamido-6-oxoheptanedioate + CoA. Its pathway is amino-acid biosynthesis; L-lysine biosynthesis via DAP pathway; LL-2,6-diaminopimelate from (S)-tetrahydrodipicolinate (acetylase route): step 1/3. Its function is as follows. Catalyzes the transfer of an acetyl group from acetyl-CoA to tetrahydrodipicolinate. In Bacillus mycoides (strain KBAB4) (Bacillus weihenstephanensis), this protein is 2,3,4,5-tetrahydropyridine-2,6-dicarboxylate N-acetyltransferase.